The sequence spans 230 residues: Prolactin-3D1 (230 aa).

An N-terminal signal peptide occupies residues 1 to 29; that stretch reads MQLTLTLSRASGMQLFLLVSSLLLWEKVA. 2 disulfides stabilise this stretch: Cys81–Cys200 and Cys217–Cys225. N-linked (GlcNAc...) asparagine glycosylation is found at Asn109 and Asn158.

This sequence belongs to the somatotropin/prolactin family.

The protein localises to the secreted. This Rattus norvegicus (Rat) protein is Prolactin-3D1 (Prl3d1).